We begin with the raw amino-acid sequence, 289 residues long: ATP synthase gamma chain (289 aa).

It belongs to the ATPase gamma chain family. As to quaternary structure, F-type ATPases have 2 components, CF(1) - the catalytic core - and CF(0) - the membrane proton channel. CF(1) has five subunits: alpha(3), beta(3), gamma(1), delta(1), epsilon(1). CF(0) has three main subunits: a, b and c.

It is found in the cell membrane. In terms of biological role, produces ATP from ADP in the presence of a proton gradient across the membrane. The gamma chain is believed to be important in regulating ATPase activity and the flow of protons through the CF(0) complex. The chain is ATP synthase gamma chain from Mycoplasmoides gallisepticum (strain R(low / passage 15 / clone 2)) (Mycoplasma gallisepticum).